We begin with the raw amino-acid sequence, 319 residues long: Acetyl-coenzyme A carboxylase carboxyl transferase subunit alpha (319 aa).

Residues 35-296 (DLDKEIEQLE…KATLLRQLED (262 aa)) enclose the CoA carboxyltransferase C-terminal domain.

The protein belongs to the AccA family. Acetyl-CoA carboxylase is a heterohexamer composed of biotin carboxyl carrier protein (AccB), biotin carboxylase (AccC) and two subunits each of ACCase subunit alpha (AccA) and ACCase subunit beta (AccD).

It localises to the cytoplasm. It catalyses the reaction N(6)-carboxybiotinyl-L-lysyl-[protein] + acetyl-CoA = N(6)-biotinyl-L-lysyl-[protein] + malonyl-CoA. It participates in lipid metabolism; malonyl-CoA biosynthesis; malonyl-CoA from acetyl-CoA: step 1/1. Functionally, component of the acetyl coenzyme A carboxylase (ACC) complex. First, biotin carboxylase catalyzes the carboxylation of biotin on its carrier protein (BCCP) and then the CO(2) group is transferred by the carboxyltransferase to acetyl-CoA to form malonyl-CoA. The protein is Acetyl-coenzyme A carboxylase carboxyl transferase subunit alpha of Vibrio parahaemolyticus serotype O3:K6 (strain RIMD 2210633).